The primary structure comprises 360 residues: MNAPLGGIWPWLPLLLTWLTPEVSSSWWYMRATGGSSRVMCDNVPGLVSRQRQLCHRHPDVMRAIGLGVAEWTAECQHQFRQHRWNCNTLDRDHSLFGRVLLRSSRESAFVYAVSSAGVVFAITRACSQGELKSCSCDPKKKGTAKDSKGNFDWGGCSDNIDYGIKFARAFVDAKERKGKDARALMNLHNNRAGRKAVKRFLKQECKCHGVSGSCTLRTCWLAMADFRKTGDYLWRKYNGAIQVVMNQDGTGFTVANKRFKKPTKNDLVYFENSPDYCIRDRDAGSLGTAGRVCNLTSRGMDSCEVMCCGRGYDTSHVTRMTKCECKFHWCCAVRCQDCLEALDVHTCKAPKSVDWAAPT.

A signal peptide spans 1-25; the sequence is MNAPLGGIWPWLPLLLTWLTPEVSS. 11 cysteine pairs are disulfide-bonded: Cys76/Cys87, Cys127/Cys135, Cys137/Cys157, Cys206/Cys220, Cys208/Cys215, Cys278/Cys309, Cys294/Cys304, Cys308/Cys348, Cys324/Cys339, Cys326/Cys336, and Cys331/Cys332. A lipid anchor (O-palmitoleoyl serine; by PORCN) is attached at Ser212. Asn295 is a glycosylation site (N-linked (GlcNAc...) asparagine).

It belongs to the Wnt family. Post-translationally, palmitoleoylation is required for efficient binding to frizzled receptors. Depalmitoleoylation leads to Wnt signaling pathway inhibition.

It is found in the secreted. It localises to the extracellular space. The protein resides in the extracellular matrix. Functionally, ligand for members of the frizzled family of seven transmembrane receptors. Functions in the canonical Wnt signaling pathway that results in activation of transcription factors of the TCF/LEF family. Functions as a upstream regulator of FGF10 expression. Plays an important role in embryonic lung development. May contribute to embryonic brain development by regulating the proliferation of dopaminergic precursors and neurons. The sequence is that of Protein Wnt-2 (WNT2) from Felis catus (Cat).